Here is a 608-residue protein sequence, read N- to C-terminus: Translation initiation factor RLI1 (608 aa).

4Fe-4S ferredoxin-type domains are found at residues 7-39 (RIAI…KLCI) and 46-75 (KIAF…IINL). ABC transporter domains are found at residues 70-320 (IQII…FLDG) and 345-568 (LQND…LKNL). Residue 110–117 (GTNGIGKS) participates in ATP binding. At Ser349 the chain carries Phosphoserine. ATP is bound at residue 385-392 (GENGTGKT).

It belongs to the ABC transporter superfamily. ABCE family. Component of the multifactor complex (MFC) composed of at least RLI1, the eIF2 subunit SUI2, TIF5/eIF5, and the eIF3 subunits PRT1, HCR1, NIP1, RPG1, TIF34 and TIF35. The complex associates with pre-initiation complexes. Interacts with the complex YAE1:LTO1; the complex bridges the interaction between the CIA complex and RLI1.

It is found in the cytoplasm. The protein resides in the nucleus. In terms of biological role, component of the multifactor complex (MFC) involved in translation initiation. Required for the binding of MFC to the 40S ribosome. Required for the processing and nuclear export of the 60S and 40S ribosomal subunits. The polypeptide is Translation initiation factor RLI1 (RLI1) (Saccharomyces cerevisiae (strain ATCC 204508 / S288c) (Baker's yeast)).